A 180-amino-acid polypeptide reads, in one-letter code: ATP-dependent protease subunit HslV (180 aa).

Thr5 is a catalytic residue. The Na(+) site is built by Gly165, Cys168, and Thr171.

This sequence belongs to the peptidase T1B family. HslV subfamily. As to quaternary structure, a double ring-shaped homohexamer of HslV is capped on each side by a ring-shaped HslU homohexamer. The assembly of the HslU/HslV complex is dependent on binding of ATP.

It localises to the cytoplasm. It catalyses the reaction ATP-dependent cleavage of peptide bonds with broad specificity.. Allosterically activated by HslU binding. Its function is as follows. Protease subunit of a proteasome-like degradation complex believed to be a general protein degrading machinery. In Helicobacter pylori (strain G27), this protein is ATP-dependent protease subunit HslV.